A 479-amino-acid chain; its full sequence is Sulfate adenylyltransferase subunit 1 (479 aa).

One can recognise a tr-type G domain in the interval 25 to 239; sequence KSLLRFLTCG…EVLETVDIQR (215 aa). Positions 34-41 are G1; it reads GSVDDGKS. 34-41 provides a ligand contact to GTP; sequence GSVDDGKS. Residues 92–96 are G2; it reads GITID. The segment at 113-116 is G3; the sequence is DTPG. GTP is bound by residues 113 to 117 and 168 to 171; these read DTPGH and NKMD. Positions 168-171 are G4; it reads NKMD. The interval 206 to 208 is G5; it reads SAL.

It belongs to the TRAFAC class translation factor GTPase superfamily. Classic translation factor GTPase family. CysN/NodQ subfamily. As to quaternary structure, heterodimer composed of CysD, the smaller subunit, and CysN.

It catalyses the reaction sulfate + ATP + H(+) = adenosine 5'-phosphosulfate + diphosphate. Its pathway is sulfur metabolism; hydrogen sulfide biosynthesis; sulfite from sulfate: step 1/3. Functionally, with CysD forms the ATP sulfurylase (ATPS) that catalyzes the adenylation of sulfate producing adenosine 5'-phosphosulfate (APS) and diphosphate, the first enzymatic step in sulfur assimilation pathway. APS synthesis involves the formation of a high-energy phosphoric-sulfuric acid anhydride bond driven by GTP hydrolysis by CysN coupled to ATP hydrolysis by CysD. The polypeptide is Sulfate adenylyltransferase subunit 1 (Salmonella typhi).